The following is a 140-amino-acid chain: Cystatin-like 1 (140 aa).

The N-terminal stretch at 1 to 23 is a signal peptide; the sequence is MEMKARGLRIPLLLLLVTVVVMA. The Cystatin domain occupies 32–126; it reads GGFKEKAMSK…CKSLIYSVPW (95 aa). A glycan (N-linked (GlcNAc...) asparagine) is linked at N45. Cystine bridges form between C94/C104 and C117/C137.

It belongs to the cystatin family. Highly expressed in testis where it localizes to spermatogonium, spermatocyes and round spermatids. Not detected in spermatozoa. Also detected in epididymis, cerebrum and pituitary.

It localises to the secreted. This chain is Cystatin-like 1, found in Mus musculus (Mouse).